Reading from the N-terminus, the 1493-residue chain is MENRPGSFQYVPVQLQGGAPWGFTLKGGLEHCEPLTVSKIEDGGKAALSQKMRTGDELVNINGTPLYGSRQEALILIKGSFRILKLIVRRRNAPVSRPHSWHVAKLLEGCPEAATTMHFPSEAFSLSWHSGCNTSDVCVQWCPLSRHCSTEKSSSIGSMESLEQPGQATYESHLLPIDQNMYPNQRDSAYSSFSASSNASDCALSLRPEEPASTDCIMQGPGPTKAPSGRPNVAETSGGSRRTNGGHLTPSSQMSSRPQEGYQSGPAKAVRGPPQPPVRRDSLQASRAQLLNGEQRRASEPVVPLPQKEKLSLEPVLPARNPNRFCCLSGHDQVTSEGHQNCEFSQPPESSQQGSEHLLMQASTKAVGSPKACDRASSVDSNPLNEASAELAKASFGRPPHLIGPTGHRHSAPEQLLASHLQHVHLDTRGSKGMELPPVQDGHQWTLSPLHSSHKGKKSPCPPTGGTHDQSSKERKTRQVDDRSLVLGHQSQSSPPHGEADGHPSEKGFLDPNRTSRAASELANQQPSASGSLVQQATDCSSTTKAASGTEAGEEGDSEPKECSRMGGRRSGGTRGRSIQNRRKSERFATNLRNEIQRRKAQLQKSKGPLSQLCDTKEPVEETQEPPESPPLTASNTSLLSSCKKPPSPRDKLFNKSMMLRARSSECLSQAPESHESRTGLEGRISPGQRPGQSSLGLNTWWKAPDPSSSDPEKAHAHCGVRGGHWRWSPEHNSQPLVAAAMEGPSNPGDNKELKASTAQAGEDAILLPFADRRKFFEESSKSLSTSHLPGLTTHSNKTFTQRPKPIDQNFQPMSSSCRELRRHPMDQSYHSADQPYHATDQSYHSMSPLQSETPTYSECFASKGLENSMCCKPLHCGDFDYHRTCSYSCSVQGALVHDPCIYCSGEICPALLKRNMMPNCYNCRCHHHQCIRCSVCYHNPQHSALEDSSLAPGNTWKPRKLTVQEFPGDKWNPITGNRKTSQSGREMAHSKTSFSWATPFHPCLENPALDLSSYRAISSLDLLGDFKHALKKSEETSVYEEGSSLASMPHPLRSRAFSESHISLAPQSTRAWGQHRRELFSKGDETQSDLLGARKKAFPPPRPPPPNWEKYRLFRAAQQQKQQQQQQKQQEEEEEEEEEEEEEEEEEEEEAEEEEEELPPQYFSSETSGSCALNPEEVLEQPQPLSFGHLEGSRQGSQSVPAEQESFALHSSDFLPPIRGHLGSQPEQAQPPCYYGIGGLWRTSGQEATESAKQEFQHFSPPSGAPGIPTSYSAYYNISVAKAELLNKLKDQPEMAEIGLGEEEVDHELAQKKIQLIESISRKLSVLREAQRGLLEDINANSALGEEVEANLKAVCKSNEFEKYHLFVGDLDKVVNLLLSLSGRLARVENALNSIDSEANQEKLVLIEKKQQLTGQLADAKELKEHVDRREKLVFGMVSRYLPQDQLQDYQHFVKMKSALIIEQRELEEKIKLGEEQLKCLRESLLLGPSNF.

The PDZ domain maps to 10-92; the sequence is YVPVQLQGGA…ILKLIVRRRN (83 aa). Positions 202–282 are disordered; it reads CALSLRPEEP…PPQPPVRRDS (81 aa). Composition is skewed to polar residues over residues 234–243 and 249–262; these read AETSGGSRRT and TPSS…QEGY. Position 411 is a phosphoserine (Ser-411). The interval 430–695 is disordered; that stretch reads GSKGMELPPV…SPGQRPGQSS (266 aa). Basic and acidic residues-rich tracts occupy residues 470-484 and 498-509; these read QSSK…DDRS and GEADGHPSEKGF. Residues 513–547 are compositionally biased toward polar residues; the sequence is NRTSRAASELANQQPSASGSLVQQATDCSSTTKAA. Ser-729 is subject to Phosphoserine. Disordered regions lie at residues 740 to 759 and 781 to 813; these read AAME…ASTA and SKSL…NFQP. Positions 782-802 are enriched in polar residues; the sequence is KSLSTSHLPGLTTHSNKTFTQ. Ser-1019 carries the post-translational modification Phosphoserine. 4 disordered regions span residues 1117-1170, 1187-1206, 1214-1236, and 1246-1265; these read AAQQ…ETSG, SFGH…AEQE, DFLP…PCYY, and GQEA…PPSG. Over residues 1118 to 1129 the composition is skewed to low complexity; sequence AQQQKQQQQQQK. Acidic residues predominate over residues 1132–1159; it reads EEEEEEEEEEEEEEEEEEEEAEEEEEEL. The 280-residue stretch at 1213–1492 folds into the ASD2 domain; that stretch reads SDFLPPIRGH…RESLLLGPSN (280 aa). Residues 1382–1488 adopt a coiled-coil conformation; sequence LSGRLARVEN…LKCLRESLLL (107 aa).

Belongs to the shroom family. As to quaternary structure, interacts directly with F-actin. In terms of tissue distribution, expressed in all fetal and adult tissues investigated. Expressed in adult heart, brain, placenta, lung, liver, skeletal muscle, kidney and pancreas. In brain regions detected in cerebellum, cerebral cortex, medulla, spinal cord, occipital pole, frontal lobe, temporal lobe and putamen. The expression is strongest in the medulla and weakest in the cerebral cortex.

The protein resides in the cytoplasm. It localises to the cytoskeleton. Probable regulator of cytoskeletal architecture that plays an important role in development. May regulate cellular and cytoskeletal architecture by modulating the spatial distribution of myosin II. This chain is Protein Shroom4 (SHROOM4), found in Homo sapiens (Human).